Reading from the N-terminus, the 91-residue chain is Kazal-type trypsin inhibitor (91 aa).

The N-terminal stretch at 1–22 (MRHIGVFVGVLALALVLLVVEA) is a signal peptide. The Kazal-like domain maps to 25-78 (DAERGVCACPRIYMPVCGSNLKTYNNDCLLRCEINSDLGRANNLRKIADQACDN). 3 disulfide bridges follow: C31–C56, C33–C52, and C41–C76. N78 carries N-linked (GlcNAc...) asparagine glycosylation.

Interacts with human PLG (plasmin). In terms of tissue distribution, female salivary gland. Female gut at 3 and 24 hours after blood feeding. Female carcass. Male tissues. Not detected in ovary and fat body at 3 and 24 hours after blood feeding.

Its subcellular location is the secreted. Functionally, anticoagulant protein that decreases host thrombin (F2) activity via an uncompetitive inhibition mechanism. Inhibits amidolytic activity of host plasmin (PLG). Inhibits amidolytic activity of host trypsin. Inhibits trypsin-like endogenous activity from gut of female mosquitoes 24 hours after feeding and weakly affects enzyme activity from gut 3 hours after feeding, suggesting a possible role as an inhibitor of endogenous proteases. (Microbial infection) Limits host plasmin-mediated enhancement of dengue virus type 2 infection in mosquito midgut. The sequence is that of Kazal-type trypsin inhibitor from Aedes aegypti (Yellowfever mosquito).